A 219-amino-acid polypeptide reads, in one-letter code: Small ribosomal subunit protein uS5 (219 aa).

Residues 1–32 form a disordered region; sequence MSHPQSRPGGRDGRPRRRREPREEAPWVPKTA. The 64-residue stretch at 68–131 folds into the S5 DRBM domain; that stretch reads LKTEVVDVGI…NQALLNVGPI (64 aa).

This sequence belongs to the universal ribosomal protein uS5 family. As to quaternary structure, part of the 30S ribosomal subunit. Contacts protein S4.

With S4 and S12 plays an important role in translational accuracy. The sequence is that of Small ribosomal subunit protein uS5 (rps5) from Cenarchaeum symbiosum (strain A).